Reading from the N-terminus, the 250-residue chain is Large ribosomal subunit protein uL4 (250 aa).

Disordered regions lie at residues 1–20 (MQVT…DLPR) and 51–101 (YAGL…HGLD). Residues 92–101 (PKAEKDHGLD) show a composition bias toward basic and acidic residues.

The protein belongs to the universal ribosomal protein uL4 family. Part of the 50S ribosomal subunit.

Its function is as follows. One of the primary rRNA binding proteins, this protein initially binds near the 5'-end of the 23S rRNA. It is important during the early stages of 50S assembly. It makes multiple contacts with different domains of the 23S rRNA in the assembled 50S subunit and ribosome. In terms of biological role, forms part of the polypeptide exit tunnel. The sequence is that of Large ribosomal subunit protein uL4 from Halobacterium salinarum (strain ATCC 29341 / DSM 671 / R1).